Here is a 348-residue protein sequence, read N- to C-terminus: NADH-ubiquinone oxidoreductase chain 2 (348 aa).

Transmembrane regions (helical) follow at residues 3–23 (PYVLMILLSSLGLGTTLTFAS), 60–80 (FLTQATAAAMILFASTTNAWM), 96–116 (TMFMTALALKIGLAPMHFWMP), 149–169 (IDPLLLTLLGVTSTLVGGWGG), 178–197 (ILAYSSIAHMGWMIIVIQYA), 202–219 (LLALGTYIIMTSAAFLTL), 246–266 (LVLLSLGGLPPLTGFMPKWLI), 274–294 (DLPIIATTMALAALISLYFYL), and 326–346 (LALFTMATLGLLPMTPAILTL).

Belongs to the complex I subunit 2 family.

It is found in the mitochondrion inner membrane. The enzyme catalyses a ubiquinone + NADH + 5 H(+)(in) = a ubiquinol + NAD(+) + 4 H(+)(out). In terms of biological role, core subunit of the mitochondrial membrane respiratory chain NADH dehydrogenase (Complex I) that is believed to belong to the minimal assembly required for catalysis. Complex I functions in the transfer of electrons from NADH to the respiratory chain. The immediate electron acceptor for the enzyme is believed to be ubiquinone. This is NADH-ubiquinone oxidoreductase chain 2 (MT-ND2) from Carassius auratus (Goldfish).